A 254-amino-acid chain; its full sequence is MTTISVIKVSGHELDDPTFLGGLTAALRGFQQPLVLVHGGGKEISAAVERAGLQIEFVDGLRVTSPAVMDIMQMVVCGTINKRIVTALVNAGVKAIGLSGLDLGLLRCEPYRPAGRDLGRVGEVTAVDGAALLHLLALGWMPVIAPVALGATDGLSYNVNADMVAEAVAGALAGAELVFVSNVPGVLVDGRVVPALTPAAVEELIANGVISGGMIPKVRAALAALQRGASSVRIVNLAGLHDGGTRFTHGELSE.

Substrate contacts are provided by residues 40 to 41 (GG), R62, and N158.

It belongs to the acetylglutamate kinase family. ArgB subfamily.

Its subcellular location is the cytoplasm. The enzyme catalyses N-acetyl-L-glutamate + ATP = N-acetyl-L-glutamyl 5-phosphate + ADP. It participates in amino-acid biosynthesis; L-arginine biosynthesis; N(2)-acetyl-L-ornithine from L-glutamate: step 2/4. Its function is as follows. Catalyzes the ATP-dependent phosphorylation of N-acetyl-L-glutamate. In Chloroflexus aurantiacus (strain ATCC 29366 / DSM 635 / J-10-fl), this protein is Acetylglutamate kinase.